Consider the following 31-residue polypeptide: Malate dehydrogenase, mitochondrial (31 aa).

Residues G9–K19 and D20–K31 each bind NAD(+).

It belongs to the LDH/MDH superfamily. MDH type 1 family. As to quaternary structure, homodimer.

It localises to the mitochondrion matrix. It carries out the reaction (S)-malate + NAD(+) = oxaloacetate + NADH + H(+). This chain is Malate dehydrogenase, mitochondrial, found in Imperata cylindrica (Cogon grass).